The chain runs to 323 residues: tRNA U34 carboxymethyltransferase (323 aa).

Carboxy-S-adenosyl-L-methionine-binding positions include lysine 91, tryptophan 105, lysine 110, glycine 130, 152–154, 181–182, methionine 196, tyrosine 200, and arginine 315; these read DPT and IE.

It belongs to the class I-like SAM-binding methyltransferase superfamily. CmoB family. In terms of assembly, homotetramer.

It catalyses the reaction carboxy-S-adenosyl-L-methionine + 5-hydroxyuridine(34) in tRNA = 5-carboxymethoxyuridine(34) in tRNA + S-adenosyl-L-homocysteine + H(+). In terms of biological role, catalyzes carboxymethyl transfer from carboxy-S-adenosyl-L-methionine (Cx-SAM) to 5-hydroxyuridine (ho5U) to form 5-carboxymethoxyuridine (cmo5U) at position 34 in tRNAs. In Escherichia coli (strain K12 / MC4100 / BW2952), this protein is tRNA U34 carboxymethyltransferase.